A 999-amino-acid chain; its full sequence is Sarcoplasmic/endoplasmic reticulum calcium ATPase 3 (999 aa).

Met1 is modified (N-acetylmethionine). Residues Met1–Ser48 are Cytoplasmic-facing. Position 17 is a phosphoserine (Ser17). Residue Thr19 is modified to Phosphothreonine. Ser25 is subject to Phosphoserine. A helical transmembrane segment spans residues Leu49–Ala69. The Lumenal portion of the chain corresponds to Leu70 to Val89. Residues Glu90–Arg110 traverse the membrane as a helical segment. At Asn111–Leu253 the chain is on the cytoplasmic side. A helical membrane pass occupies residues Asp254–Val273. Topologically, residues Ile274–Tyr295 are lumenal. Residues Phe296–Ala313 traverse the membrane as a helical segment. Residues Val304, Ala305, Ile307, and Glu309 each contribute to the Ca(2+) site. Residues Val314–Met757 are Cytoplasmic-facing. Asp351 (4-aspartylphosphate intermediate) is an active-site residue. The Mg(2+) site is built by Asp351 and Thr353. Thr353 is an ATP binding site. An interaction with phospholamban 1 region spans residues Ala370 to Gln400. Thr415 carries the post-translational modification Phosphothreonine. 7 residues coordinate ATP: Glu442, Arg489, Lys515, Arg560, Thr625, Gly626, and Asp627. Ser662 is modified (phosphoserine). Positions 678 and 684 each coordinate ATP. A Mg(2+)-binding site is contributed by Asp703. Residue Asn706 participates in ATP binding. The helical transmembrane segment at Lys758 to Leu777 threads the bilayer. Residues Asn768 and Glu771 each contribute to the Ca(2+) site. At Thr778–Leu787 the chain is on the lumenal side. Residues Ile788 to Gly808 form a helical membrane-spanning segment. The interaction with phospholamban 2 stretch occupies residues Ile788–Gly808. Asn796, Thr799, and Asp800 together coordinate Ca(2+). Topologically, residues Phe809–Leu828 are cytoplasmic. Residues Ile829–Ala851 traverse the membrane as a helical segment. At Ala852 to Thr897 the chain is on the lumenal side. Residues Thr898 to Ser917 form a helical membrane-spanning segment. Residue Glu908 participates in Ca(2+) binding. The Cytoplasmic segment spans residues Glu918–Asn930. Residues Pro931–Leu949 traverse the membrane as a helical segment. Over Val950–Gly964 the chain is Lumenal. A helical membrane pass occupies residues Arg965–Lys985. At Tyr986–Lys999 the chain is on the cytoplasmic side.

Belongs to the cation transport ATPase (P-type) (TC 3.A.3) family. Type IIA subfamily. As to quaternary structure, interacts with sarcolipin (SLN). Interacts with phospholamban (PLN). Interacts with myoregulin (MRLN). Interacts with DWORF. Interacts with VMP1. Interacts with TUNAR; the interaction occurs at low levels in low glucose conditions and is increased by high glucose levels. Requires Mg(2+) as cofactor.

It localises to the endoplasmic reticulum membrane. The protein resides in the sarcoplasmic reticulum membrane. It carries out the reaction Ca(2+)(in) + ATP + H2O = Ca(2+)(out) + ADP + phosphate + H(+). With respect to regulation, inhibited by sarcolipin (SLN), phospholamban (PLN) and myoregulin (MRLN). Enhanced by DWORF; DWORF increases activity by displacing sarcolipin (SLN), phospholamban (PLN) and myoregulin (MRLN). Functionally, this magnesium-dependent enzyme catalyzes the hydrolysis of ATP coupled with the transport of calcium. Transports calcium ions from the cytosol into the sarcoplasmic/endoplasmic reticulum lumen. Contributes to calcium sequestration involved in muscular excitation/contraction. The chain is Sarcoplasmic/endoplasmic reticulum calcium ATPase 3 (Atp2a3) from Mus musculus (Mouse).